A 787-amino-acid polypeptide reads, in one-letter code: Mitochondrial 15S rRNA processing factor CCM1 (787 aa).

The transit peptide at 1–12 (MMLRLSVKKRCM) directs the protein to the mitochondrion. The segment covering 38–48 (QKGKPTLRKSK) has biased composition (basic residues). The tract at residues 38–58 (QKGKPTLRKSKGSNDGGAVNN) is disordered. PPR repeat units lie at residues 286-320 (SRET…KLEP), 321-356 (SQKT…SQKT), and 359-393 (DTRA…KIEI).

The protein belongs to the CCM1 family. In terms of assembly, binds to mitochondrial small subunit 15S rRNA.

Its subcellular location is the mitochondrion. In terms of biological role, regulates mitochondrial small subunit maturation by controlling 15S rRNA 5'-end processing. Localizes to the 5' precursor of the 15S rRNA in a position that is subsequently occupied by mS47 in the mature yeast mtSSU. Uses structure and sequence-specific RNA recognition, binding to a single-stranded region of the precursor and specifically recognizing bases -6 to -1. The exchange of Ccm1 for mS47 is coupled to the irreversible removal of precursor rRNA that is accompanied by conformational changes of the mitoribosomal proteins uS5m and mS26. These conformational changes signal completion of 5'-end rRNA processing through protection of the mature 5'-end of the 15S rRNA and stabilization of mS47. The removal of the 5' precursor together with the dissociation of Ccm1 may be catalyzed by the 5'-3' exoribonuclease Pet127. Involved in the specific removal of group I introns in mitochondrial encoded transcripts. In Debaryomyces hansenii (strain ATCC 36239 / CBS 767 / BCRC 21394 / JCM 1990 / NBRC 0083 / IGC 2968) (Yeast), this protein is Mitochondrial 15S rRNA processing factor CCM1 (CCM1).